We begin with the raw amino-acid sequence, 155 residues long: Small ribosomal subunit protein uS7c (155 aa).

This sequence belongs to the universal ribosomal protein uS7 family. Part of the 30S ribosomal subunit.

It is found in the plastid. It localises to the chloroplast. One of the primary rRNA binding proteins, it binds directly to 16S rRNA where it nucleates assembly of the head domain of the 30S subunit. The chain is Small ribosomal subunit protein uS7c (rps7) from Marchantia polymorpha (Common liverwort).